The following is a 306-amino-acid chain: MGMSSRTNPKVAVLMGGPSAEREVSLVSGRECAAALRGEGFEVVELDAGSDLCDRLRASAPDVVFNALHGRWGEDGCVQGLLEWLRIPYTSSGVLASALAMDKERSKEAYRAAGLPVAASQLADRAAIEAAHVMQPPYVVKPYNEGSSVGVYIVTEAANGPPVLAPDLPATLMVEEYVPGRELSTTVLGDRALNVTDIITDGWYDYHAKYSPGGSRHVIPADLPPEIFELCLDYALRAHKALGCRGLSRTDFRWDESRGAAGLFLLETNTQPGMTPTSLAPEQALAAGMSFGQLCAWMVEDASCDR.

Positions 107–300 (KEAYRAAGLP…FGQLCAWMVE (194 aa)) constitute an ATP-grasp domain. Position 134-184 (134-184 (MQPPYVVKPYNEGSSVGVYIVTEAANGPPVLAPDLPATLMVEEYVPGRELS)) interacts with ATP. Mg(2+) contacts are provided by Asp251, Glu267, and Asn269.

This sequence belongs to the D-alanine--D-alanine ligase family. Requires Mg(2+) as cofactor. The cofactor is Mn(2+).

The protein resides in the cytoplasm. It carries out the reaction 2 D-alanine + ATP = D-alanyl-D-alanine + ADP + phosphate + H(+). The protein operates within cell wall biogenesis; peptidoglycan biosynthesis. Functionally, cell wall formation. This chain is D-alanine--D-alanine ligase, found in Ruegeria pomeroyi (strain ATCC 700808 / DSM 15171 / DSS-3) (Silicibacter pomeroyi).